The primary structure comprises 416 residues: Serine hydroxymethyltransferase (416 aa).

(6S)-5,6,7,8-tetrahydrofolate-binding positions include leucine 121 and 125–127 (GHL). Lysine 229 is modified (N6-(pyridoxal phosphate)lysine). (6S)-5,6,7,8-tetrahydrofolate-binding positions include glutamate 245 and 354-356 (SPF).

This sequence belongs to the SHMT family. In terms of assembly, homodimer. Pyridoxal 5'-phosphate is required as a cofactor.

It is found in the cytoplasm. The enzyme catalyses (6R)-5,10-methylene-5,6,7,8-tetrahydrofolate + glycine + H2O = (6S)-5,6,7,8-tetrahydrofolate + L-serine. Its pathway is one-carbon metabolism; tetrahydrofolate interconversion. The protein operates within amino-acid biosynthesis; glycine biosynthesis; glycine from L-serine: step 1/1. In terms of biological role, catalyzes the reversible interconversion of serine and glycine with tetrahydrofolate (THF) serving as the one-carbon carrier. This reaction serves as the major source of one-carbon groups required for the biosynthesis of purines, thymidylate, methionine, and other important biomolecules. Also exhibits THF-independent aldolase activity toward beta-hydroxyamino acids, producing glycine and aldehydes, via a retro-aldol mechanism. The chain is Serine hydroxymethyltransferase from Aliivibrio fischeri (strain ATCC 700601 / ES114) (Vibrio fischeri).